A 379-amino-acid chain; its full sequence is Sulfate adenylyltransferase (379 aa).

The protein belongs to the sulfate adenylyltransferase family.

It carries out the reaction sulfate + ATP + H(+) = adenosine 5'-phosphosulfate + diphosphate. Its pathway is sulfur metabolism; hydrogen sulfide biosynthesis; sulfite from sulfate: step 1/3. The chain is Sulfate adenylyltransferase from Thermococcus onnurineus (strain NA1).